The chain runs to 239 residues: Ribonuclease 3 (239 aa).

The 124-residue stretch at 18–141 folds into the RNase III domain; that stretch reads YLTLEKALGY…LMAGVYLEAG (124 aa). Glutamate 54 provides a ligand contact to Mg(2+). Aspartate 58 is a catalytic residue. Residues serine 127 and glutamate 130 each contribute to the Mg(2+) site. The active site involves glutamate 130. The 70-residue stretch at 168–237 folds into the DRBM domain; that stretch reads DYKTALQELT…AYQALQKLKE (70 aa).

Belongs to the ribonuclease III family. As to quaternary structure, homodimer. Requires Mg(2+) as cofactor.

It is found in the cytoplasm. It carries out the reaction Endonucleolytic cleavage to 5'-phosphomonoester.. Its function is as follows. Digests double-stranded RNA. Involved in the processing of primary rRNA transcript to yield the immediate precursors to the large and small rRNAs (23S and 16S). Processes some mRNAs, and tRNAs when they are encoded in the rRNA operon. Processes pre-crRNA and tracrRNA of type II CRISPR loci if present in the organism. The polypeptide is Ribonuclease 3 (Helicobacter pylori (strain P12)).